The primary structure comprises 265 residues: Synaptoporin (265 aa).

At 1–4 the chain is on the cytoplasmic side; that stretch reads MCMV. In terms of domain architecture, MARVEL spans 1-202; the sequence is MCMVIFAPLF…NIWFVFKETG (202 aa). Residues 5 to 25 traverse the membrane as a helical segment; the sequence is IFAPLFAIFAFATCGGYSGGL. Residues 26-81 lie on the Vesicular side of the membrane; it reads RLSVDCVNKTESNLSIDIAFAYPFRLHQVTFEVPTCEGKERQKLALIGDSSSSAEF. N-linked (GlcNAc...) asparagine glycosylation is found at Asn-33 and Asn-38. The helical transmembrane segment at 82–102 threads the bilayer; the sequence is FVTVAVFAFLYSLAATVVYIF. The Cytoplasmic segment spans residues 103 to 114; sequence FQNKYRENNRGP. A helical transmembrane segment spans residues 115-135; that stretch reads LIDFIVTVVFSFLWLVGSSAW. Over 136-177 the chain is Vesicular; it reads AKGLSDVKVATDPKEVLLLMSACKQPSNKCMAIHSPVMSSLN. The helical transmembrane segment at 178–198 threads the bilayer; sequence TSVVFGFLNFILWAGNIWFVF. The Cytoplasmic portion of the chain corresponds to 199–265; that stretch reads KETGWHSSGQ…TGPTSFTNQI (67 aa). 5 tandem repeats follow at residues 210-214, 222-226, 227-231, 232-236, and 238-242. The segment at 210-242 is 5 X approximate repeats; sequence YLSDPMEKHSSSYNQGGYNQDSYGSSSGYSQQA. Ser-212 carries the phosphoserine modification. Residues 221-265 are disordered; that stretch reads SYNQGGYNQDSYGSSSGYSQQASLGPTSDEFGQQPTGPTSFTNQI. Residues 224–243 show a composition bias toward low complexity; that stretch reads QGGYNQDSYGSSSGYSQQAS. A compositionally biased stretch (polar residues) spans 244–265; sequence LGPTSDEFGQQPTGPTSFTNQI.

The protein belongs to the synaptophysin/synaptobrevin family.

The protein localises to the cytoplasmic vesicle. It localises to the secretory vesicle. The protein resides in the synaptic vesicle membrane. Its subcellular location is the synapse. It is found in the synaptosome. Functionally, intrinsic membrane protein of small synaptic vesicles. Probable vesicular channel protein. The sequence is that of Synaptoporin (SYNPR) from Homo sapiens (Human).